Reading from the N-terminus, the 144-residue chain is Prefoldin subunit alpha (144 aa).

This sequence belongs to the prefoldin alpha subunit family. In terms of assembly, heterohexamer of two alpha and four beta subunits.

It localises to the cytoplasm. Molecular chaperone capable of stabilizing a range of proteins. Seems to fulfill an ATP-independent, HSP70-like function in archaeal de novo protein folding. The sequence is that of Prefoldin subunit alpha from Methanococcus maripaludis (strain C7 / ATCC BAA-1331).